Here is an 85-residue protein sequence, read N- to C-terminus: Cell division topological specificity factor (85 aa).

It belongs to the MinE family.

Prevents the cell division inhibition by proteins MinC and MinD at internal division sites while permitting inhibition at polar sites. This ensures cell division at the proper site by restricting the formation of a division septum at the midpoint of the long axis of the cell. The chain is Cell division topological specificity factor from Xylella fastidiosa (strain M12).